Consider the following 312-residue polypeptide: MAEFEDQLVFNSISARALKAYFTAKINEMVDELVTRKCPQKKKSQAKKPEVRIPVDLVKSSFVKKFGLCNYGGILISLINSLVENNFFTKNGKLDDTGKKELVLTDVEKRILNTIDKSSPLYIDISDVKVLAARLKRSATQFNFNGHTYHLENDKIEDLINQLVKDESIQLDEKSSIKDSMYVIPDELIDVLKTRLFRSPQVKDNIISRTRLYDYFTRVTKRDESSIYVILKDPRIASILSLETVKMGAFMYTKHSMLTNAISSRVDRYSKKFQESFYEDIAEFVKENERVNVSRVVECLTVPNITISSNTE.

It belongs to the orthopoxvirus OPG077 family.

It localises to the virion. Functionally, DNA-binding protein which binds to the hairpin form of the viral telomeric sequence. Required for the production of mature virions (MV). The sequence is that of Telomere-binding protein OPG077 (OPG077) from Monkeypox virus.